The following is a 301-amino-acid chain: 33 kDa chaperonin (301 aa).

2 disulfide bridges follow: Cys240–Cys242 and Cys273–Cys276.

This sequence belongs to the HSP33 family. Under oxidizing conditions two disulfide bonds are formed involving the reactive cysteines. Under reducing conditions zinc is bound to the reactive cysteines and the protein is inactive.

It localises to the cytoplasm. Redox regulated molecular chaperone. Protects both thermally unfolding and oxidatively damaged proteins from irreversible aggregation. Plays an important role in the bacterial defense system toward oxidative stress. This is 33 kDa chaperonin from Rippkaea orientalis (strain PCC 8801 / RF-1) (Cyanothece sp. (strain PCC 8801)).